Here is a 325-residue protein sequence, read N- to C-terminus: Phospho-N-acetylmuramoyl-pentapeptide-transferase (325 aa).

The next 9 helical transmembrane spans lie at 7–27 (LFVL…FIPF), 57–77 (IVIV…ITGF), 81–101 (LLLL…DDYL), 122–142 (VIAA…FIAI), 146–166 (TFGF…LLGA), 186–206 (IAFG…TALF), 227–247 (VFMG…IAIL), 252–272 (LMLI…IIQV), and 302–322 (VVVT…YIGV).

This sequence belongs to the glycosyltransferase 4 family. MraY subfamily. The cofactor is Mg(2+).

Its subcellular location is the cell membrane. It carries out the reaction UDP-N-acetyl-alpha-D-muramoyl-L-alanyl-gamma-D-glutamyl-meso-2,6-diaminopimeloyl-D-alanyl-D-alanine + di-trans,octa-cis-undecaprenyl phosphate = di-trans,octa-cis-undecaprenyl diphospho-N-acetyl-alpha-D-muramoyl-L-alanyl-D-glutamyl-meso-2,6-diaminopimeloyl-D-alanyl-D-alanine + UMP. It functions in the pathway cell wall biogenesis; peptidoglycan biosynthesis. Catalyzes the initial step of the lipid cycle reactions in the biosynthesis of the cell wall peptidoglycan: transfers peptidoglycan precursor phospho-MurNAc-pentapeptide from UDP-MurNAc-pentapeptide onto the lipid carrier undecaprenyl phosphate, yielding undecaprenyl-pyrophosphoryl-MurNAc-pentapeptide, known as lipid I. The sequence is that of Phospho-N-acetylmuramoyl-pentapeptide-transferase from Shouchella clausii (strain KSM-K16) (Alkalihalobacillus clausii).